We begin with the raw amino-acid sequence, 1060 residues long: Carbamoyl phosphate synthase large chain (1060 aa).

Residues 1-401 (MPKRQDIHKI…SLLKAVRSLE (401 aa)) form a carboxyphosphate synthetic domain region. ATP contacts are provided by Arg129, Arg169, Gly175, Gly176, Arg208, Ile210, Glu215, Gly241, Val242, His243, Gln284, and Glu298. The ATP-grasp 1 domain maps to 133–327 (KNLMQKLHEP…IAKMAAKIAV (195 aa)). Mg(2+)-binding residues include Gln284, Glu298, and Asn300. Mn(2+)-binding residues include Gln284, Glu298, and Asn300. Residues 402-546 (VGLIHPERPA…YSTYESSTES (145 aa)) form an oligomerization domain region. The segment at 547–929 (VKSDKPSVLV…ALYKAFEAAG (383 aa)) is carbamoyl phosphate synthetic domain. The ATP-grasp 2 domain maps to 671-861 (DQVIKSLKLP…LAQVATLAIL (191 aa)). ATP is bound by residues Arg707, His746, Leu748, Glu752, Gly777, Ile778, His779, Ser780, Gln820, and Glu832. Gln820, Glu832, and Asn834 together coordinate Mg(2+). The Mn(2+) site is built by Gln820, Glu832, and Asn834. Positions 930–1060 (MHLPQFGRAL…QAFSISPIKS (131 aa)) constitute an MGS-like domain. An allosteric domain region spans residues 930 to 1060 (MHLPQFGRAL…QAFSISPIKS (131 aa)).

This sequence belongs to the CarB family. In terms of assembly, composed of two chains; the small (or glutamine) chain promotes the hydrolysis of glutamine to ammonia, which is used by the large (or ammonia) chain to synthesize carbamoyl phosphate. Tetramer of heterodimers (alpha,beta)4. Mg(2+) serves as cofactor. Requires Mn(2+) as cofactor.

It catalyses the reaction hydrogencarbonate + L-glutamine + 2 ATP + H2O = carbamoyl phosphate + L-glutamate + 2 ADP + phosphate + 2 H(+). The enzyme catalyses hydrogencarbonate + NH4(+) + 2 ATP = carbamoyl phosphate + 2 ADP + phosphate + 2 H(+). It functions in the pathway amino-acid biosynthesis; L-arginine biosynthesis; carbamoyl phosphate from bicarbonate: step 1/1. Its pathway is pyrimidine metabolism; UMP biosynthesis via de novo pathway; (S)-dihydroorotate from bicarbonate: step 1/3. In terms of biological role, large subunit of the glutamine-dependent carbamoyl phosphate synthetase (CPSase). CPSase catalyzes the formation of carbamoyl phosphate from the ammonia moiety of glutamine, carbonate, and phosphate donated by ATP, constituting the first step of 2 biosynthetic pathways, one leading to arginine and/or urea and the other to pyrimidine nucleotides. The large subunit (synthetase) binds the substrates ammonia (free or transferred from glutamine from the small subunit), hydrogencarbonate and ATP and carries out an ATP-coupled ligase reaction, activating hydrogencarbonate by forming carboxy phosphate which reacts with ammonia to form carbamoyl phosphate. This chain is Carbamoyl phosphate synthase large chain, found in Lacticaseibacillus paracasei (strain ATCC 334 / BCRC 17002 / CCUG 31169 / CIP 107868 / KCTC 3260 / NRRL B-441) (Lactobacillus paracasei).